The following is a 604-amino-acid chain: Beta-alanine transporter (604 aa).

Residues 1–23 (MDFDEVLREVGSFGLYQKVIICS) are Cytoplasmic-facing. A helical membrane pass occupies residues 24–44 (VLLPAALPCAFHAYSQLFIAA). The Extracellular segment spans residues 45-151 (TPQHFCRVPE…QEWNLVCDRS (107 aa)). N-linked (GlcNAc...) asparagine glycosylation is found at Asn68 and Asn88. The chain crosses the membrane as a helical span at residues 152 to 172 (FLVTLALVVFGVGGLLGNYVF). Topologically, residues 173–182 (GYLVDLWGRR) are cytoplasmic. Residues 183 to 203 (PSFYAYLLLEIIACAASAFAW) form a helical membrane-spanning segment. Residues 204 to 212 (NYYTWLGLR) lie on the Extracellular side of the membrane. A helical transmembrane segment spans residues 213–233 (FVVGLTVPAILASPYVLAIEL). The Cytoplasmic portion of the chain corresponds to 234–243 (VGPERRVFCT). Residues 244 to 264 (IVSNIAYSLGLVVLAGVIYIV) traverse the membrane as a helical segment. Over 265–268 (RDWR) the chain is Extracellular. A helical membrane pass occupies residues 269–289 (ELSLAVSMPLLMLFSCFFVLP). Over 290–362 (ESPRWLMAVG…FRGPNMRRKT (73 aa)) the chain is Cytoplasmic. The chain crosses the membrane as a helical span at residues 363–383 (LIITLIWFANTSVYVGLSYYA). Over 384–390 (PALGGDE) the chain is Extracellular. A helical membrane pass occupies residues 391 to 411 (IWNFFLAGAVELPTYLLLWPG). The Cytoplasmic portion of the chain corresponds to 412 to 418 (LSYFGRR). A helical membrane pass occupies residues 419-439 (WILFISMLVGGVACVATFLYP). Residues 440 to 442 (DIT) lie on the Extracellular side of the membrane. Residues 443-463 (LLLYCVGKMGISSSFVVLPLM) traverse the membrane as a helical segment. At 464 to 473 (ASELYPTVVR) the chain is on the cytoplasmic side. Residues 474 to 494 (GLGMSFSSVISMVGPIVIPMI) traverse the membrane as a helical segment. Residues 495 to 501 (NHMGQQM) lie on the Extracellular side of the membrane. The helical transmembrane segment at 502–522 (LVLPLIVMGALLILGGFASLL) threads the bilayer. Residues 523–604 (LPETRNRNLP…SICKNEMRTL (82 aa)) lie on the Cytoplasmic side of the membrane.

It belongs to the major facilitator (TC 2.A.1) superfamily. Organic cation transporter (TC 2.A.1.19) family. In terms of tissue distribution, expressed in the head and predominantly in the retinal pigment cells of the compound eye.

It is found in the cell membrane. Its function is as follows. Beta-alanine transporter required for the uptake of beta-alanine by the glia. Required for the recycling process of the neurotransmitter histamine in photoreceptor neurons of the compound eye and therefore for photoreceptor synaptic transmission. Following histamine release from photoreceptors and its uptake by glia, histamine is conjugated to beta-alanine by e/Ebony to form the inactive metabolite, carcinine. In Drosophila melanogaster (Fruit fly), this protein is Beta-alanine transporter.